Reading from the N-terminus, the 291-residue chain is Elongation factor Ts (291 aa).

The segment at 82–85 (TDFC) is involved in Mg(2+) ion dislocation from EF-Tu.

It belongs to the EF-Ts family.

The protein resides in the cytoplasm. In terms of biological role, associates with the EF-Tu.GDP complex and induces the exchange of GDP to GTP. It remains bound to the aminoacyl-tRNA.EF-Tu.GTP complex up to the GTP hydrolysis stage on the ribosome. This Methylobacillus flagellatus (strain ATCC 51484 / DSM 6875 / VKM B-1610 / KT) protein is Elongation factor Ts.